The following is a 375-amino-acid chain: Putative F-box protein At5g52620 (375 aa).

One can recognise an F-box domain in the interval 5 to 52 (GKSDPIPIDIILDILSRLSTNSIAKFGLASKFCGSILRGQDFIELFLI).

In Arabidopsis thaliana (Mouse-ear cress), this protein is Putative F-box protein At5g52620.